The chain runs to 257 residues: 3-methyl-2-oxobutanoate hydroxymethyltransferase (257 aa).

Mg(2+)-binding residues include D42 and D86. Residues 42 to 43 (DS), D86, and K116 each bind 3-methyl-2-oxobutanoate. E118 is a binding site for Mg(2+). E185 functions as the Proton acceptor in the catalytic mechanism.

The protein belongs to the PanB family. In terms of assembly, homodecamer; pentamer of dimers. The cofactor is Mg(2+).

Its subcellular location is the cytoplasm. The catalysed reaction is 3-methyl-2-oxobutanoate + (6R)-5,10-methylene-5,6,7,8-tetrahydrofolate + H2O = 2-dehydropantoate + (6S)-5,6,7,8-tetrahydrofolate. It functions in the pathway cofactor biosynthesis; (R)-pantothenate biosynthesis; (R)-pantoate from 3-methyl-2-oxobutanoate: step 1/2. Functionally, catalyzes the reversible reaction in which hydroxymethyl group from 5,10-methylenetetrahydrofolate is transferred onto alpha-ketoisovalerate to form ketopantoate. The chain is 3-methyl-2-oxobutanoate hydroxymethyltransferase from Prochlorococcus marinus (strain MIT 9312).